Reading from the N-terminus, the 148-residue chain is UPF0178 protein SH2212 (148 aa).

Belongs to the UPF0178 family.

This is UPF0178 protein SH2212 from Staphylococcus haemolyticus (strain JCSC1435).